The chain runs to 1124 residues: Tyrosine-protein kinase JAK3 (1124 aa).

The tract at residues 1 to 223 (MAPPSEETPL…RRTVRRALRR (223 aa)) is interaction with cytokine/interferon/growth hormone receptors. Position 17 is a phosphoserine (Ser17). The FERM domain occupies 24-356 (GALHVLLPAR…GYFRLTTDSQ (333 aa)). An SH2; atypical domain is found at 375 to 475 (QCHGPITLDF…GVAVTLTSCC (101 aa)). One can recognise a Protein kinase 1 domain in the interval 521 to 781 (LEWHENLGHG…AVIRDLNSLI (261 aa)). Position 785 is a phosphotyrosine; by autocatalysis (Tyr785). The 290-residue stretch at 822–1111 (LKYISQLGKG…SRGCETHAFT (290 aa)) folds into the Protein kinase 2 domain. Residues 828-836 (LGKGNFGSV) and Lys855 contribute to the ATP site. Phosphotyrosine occurs at positions 904 and 939. Asp949 acts as the Proton acceptor in catalysis. Tyr980 and Tyr981 each carry phosphotyrosine; by autocatalysis.

Belongs to the protein kinase superfamily. Tyr protein kinase family. JAK subfamily. In terms of assembly, interacts with STAM2 and MYO18A. Interacts with SHB. Interacts with CD69. In terms of processing, tyrosine phosphorylated in response to IL-2 and IL-4. Dephosphorylation of Tyr-980 and Tyr-981 by PTPN2 negatively regulates cytokine-mediated signaling. As to expression, in NK cells and an NK-like cell line but not in resting T-cells or in other tissues. The S-form is more commonly seen in hematopoietic lines, whereas the B-form is detected in cells both of hematopoietic and epithelial origins.

Its subcellular location is the endomembrane system. The protein resides in the cytoplasm. The enzyme catalyses L-tyrosyl-[protein] + ATP = O-phospho-L-tyrosyl-[protein] + ADP + H(+). Non-receptor tyrosine kinase involved in various processes such as cell growth, development, or differentiation. Mediates essential signaling events in both innate and adaptive immunity and plays a crucial role in hematopoiesis during T-cells development. In the cytoplasm, plays a pivotal role in signal transduction via its association with type I receptors sharing the common subunit gamma such as IL2R, IL4R, IL7R, IL9R, IL15R and IL21R. Following ligand binding to cell surface receptors, phosphorylates specific tyrosine residues on the cytoplasmic tails of the receptor, creating docking sites for STATs proteins. Subsequently, phosphorylates the STATs proteins once they are recruited to the receptor. Phosphorylated STATs then form homodimer or heterodimers and translocate to the nucleus to activate gene transcription. For example, upon IL2R activation by IL2, JAK1 and JAK3 molecules bind to IL2R beta (IL2RB) and gamma chain (IL2RG) subunits inducing the tyrosine phosphorylation of both receptor subunits on their cytoplasmic domain. Then, STAT5A and STAT5B are recruited, phosphorylated and activated by JAK1 and JAK3. Once activated, dimerized STAT5 translocates to the nucleus and promotes the transcription of specific target genes in a cytokine-specific fashion. This Homo sapiens (Human) protein is Tyrosine-protein kinase JAK3.